The sequence spans 277 residues: Caspase-3 (277 aa).

N-acetylmethionine is present on Met1. 2 propeptides span residues 1-9 (MENTENSVD) and 10-28 (SKSI…ESMD). Lys11 is modified (N6-acetyllysine). Ser26 is modified (phosphoserine). Catalysis depends on residues His121 and Cys163. An S-nitrosocysteine; in inhibited form modification is found at Cys163. Arg207 bears the (Microbial infection) ADP-riboxanated arginine mark.

It belongs to the peptidase C14A family. Heterotetramer that consists of two anti-parallel arranged heterodimers, each one formed by a 17 kDa (p17) and a 12 kDa (p12) subunit. Interacts with BIRC6/bruce. Cleavage by granzyme B, caspase-6, caspase-8 and caspase-10 generates the two active subunits. Additional processing of the propeptides is likely due to the autocatalytic activity of the activated protease. Active heterodimers between the small subunit of caspase-7 protease and the large subunit of caspase-3 also occur and vice versa. In terms of processing, S-nitrosylated on its catalytic site cysteine in unstimulated human cell lines and denitrosylated upon activation of the Fas apoptotic pathway, associated with an increase in intracellular caspase activity. Fas therefore activates caspase-3 not only by inducing the cleavage of the caspase zymogen to its active subunits, but also by stimulating the denitrosylation of its active site thiol. Post-translationally, ubiquitinated by BIRC6; this activity is inhibited by DIABLO/SMAC. (Microbial infection) ADP-riboxanation by C.violaceum CopC blocks CASP3 processing, preventing CASP3 activation and ability to recognize and cleave substrates. Highly expressed in lung, spleen, heart, liver and kidney. Moderate levels in brain and skeletal muscle, and low in testis. Also found in many cell lines, highest expression in cells of the immune system.

It is found in the cytoplasm. The enzyme catalyses Strict requirement for an Asp residue at positions P1 and P4. It has a preferred cleavage sequence of Asp-Xaa-Xaa-Asp-|- with a hydrophobic amino-acid residue at P2 and a hydrophilic amino-acid residue at P3, although Val or Ala are also accepted at this position.. Inhibited by isatin sulfonamides. Inhibited by BIRC6; following inhibition of BIRC6-caspase binding by DIABLO/SMAC, BIRC6 is subjected to caspase cleavage, leading to an increase in active caspases. Functionally, thiol protease that acts as a major effector caspase involved in the execution phase of apoptosis. Following cleavage and activation by initiator caspases (CASP8, CASP9 and/or CASP10), mediates execution of apoptosis by catalyzing cleavage of many proteins. At the onset of apoptosis, it proteolytically cleaves poly(ADP-ribose) polymerase PARP1 at a '216-Asp-|-Gly-217' bond. Cleaves and activates sterol regulatory element binding proteins (SREBPs) between the basic helix-loop-helix leucine zipper domain and the membrane attachment domain. Cleaves and activates caspase-6, -7 and -9 (CASP6, CASP7 and CASP9, respectively). Cleaves and inactivates interleukin-18 (IL18). Involved in the cleavage of huntingtin. Triggers cell adhesion in sympathetic neurons through RET cleavage. Cleaves and inhibits serine/threonine-protein kinase AKT1 in response to oxidative stress. Acts as an inhibitor of type I interferon production during virus-induced apoptosis by mediating cleavage of antiviral proteins CGAS, IRF3 and MAVS, thereby preventing cytokine overproduction. Also involved in pyroptosis by mediating cleavage and activation of gasdermin-E (GSDME). Cleaves XRCC4 and phospholipid scramblase proteins XKR4, XKR8 and XKR9, leading to promote phosphatidylserine exposure on apoptotic cell surface. Cleaves BIRC6 following inhibition of BIRC6-caspase binding by DIABLO/SMAC. This Homo sapiens (Human) protein is Caspase-3 (CASP3).